The following is a 298-amino-acid chain: Ribosomal RNA processing protein 36 homolog (298 aa).

The segment at 1–131 (MKPDIIKKRR…SDAPVEMTAM (131 aa)) is disordered. Residues 14–56 (SDDEDEYNEEDEMYEDDNNNYEEDEDDDDDDDEDDEDDDENEE) are compositionally biased toward acidic residues. Composition is skewed to polar residues over residues 61 to 70 (QQLSNVSFSS) and 83 to 92 (LNLNTITKNL). 2 coiled-coil regions span residues 88–112 (ITKN…MNSK) and 196–228 (RERD…KNKL). Residues 98 to 111 (FKKEEQQEKEEMNS) are compositionally biased toward basic and acidic residues. Residues 279–298 (ISSKEKTFLPQRRSFDQDEN) form a disordered region.

This sequence belongs to the RRP36 family.

The protein resides in the nucleus. It localises to the nucleolus. Functionally, involved in the early processing steps of the pre-rRNA in the maturation pathway leading to the 18S rRNA. The polypeptide is Ribosomal RNA processing protein 36 homolog (Dictyostelium discoideum (Social amoeba)).